The chain runs to 955 residues: 2-oxoglutarate dehydrogenase E1 component (955 aa).

It belongs to the alpha-ketoglutarate dehydrogenase family. As to quaternary structure, homodimer. Part of the 2-oxoglutarate dehydrogenase (OGDH) complex composed of E1 (2-oxoglutarate dehydrogenase), E2 (dihydrolipoamide succinyltransferase) and E3 (dihydrolipoamide dehydrogenase); the complex contains multiple copies of the three enzymatic components (E1, E2 and E3). Thiamine diphosphate is required as a cofactor.

The enzyme catalyses N(6)-[(R)-lipoyl]-L-lysyl-[protein] + 2-oxoglutarate + H(+) = N(6)-[(R)-S(8)-succinyldihydrolipoyl]-L-lysyl-[protein] + CO2. Functionally, E1 component of the 2-oxoglutarate dehydrogenase (OGDH) complex which catalyzes the decarboxylation of 2-oxoglutarate, the first step in the conversion of 2-oxoglutarate to succinyl-CoA and CO(2). This is 2-oxoglutarate dehydrogenase E1 component from Bacillus mycoides (strain KBAB4) (Bacillus weihenstephanensis).